We begin with the raw amino-acid sequence, 556 residues long: Inositol 1,4,5-trisphosphate receptor-interacting protein (556 aa).

The first 15 residues, 1 to 15 (MALGLFRVCLVVVTA), serve as a signal peptide directing secretion. The Extracellular segment spans residues 16–88 (IINHPLLFPR…EGQQQNESRT (73 aa)). N27 and N84 each carry an N-linked (GlcNAc...) asparagine glycan. The stretch at 32-87 (ENEEEIIRQMQAHQEKLQLEQLRLEEEMARLAADKEAEKEALERVAEEGQQQNESR) forms a coiled coil. Residues 89 to 107 (AWDLWSTLCMILFLVIEVW) traverse the membrane as a helical segment. Over 108–556 (RQDHQDAPSP…ASLPPKTVIL (449 aa)) the chain is Cytoplasmic.

It belongs to the ITPRIP family. As to quaternary structure, interacts with ITPR.

The protein localises to the cell membrane. It localises to the nucleus outer membrane. In terms of biological role, enhances Ca(2+)-mediated inhibition of inositol 1,4,5-triphosphate receptor (ITPR) Ca(2+) release. This is Inositol 1,4,5-trisphosphate receptor-interacting protein (ITPRIP) from Bos taurus (Bovine).